Here is a 332-residue protein sequence, read N- to C-terminus: MSRILDNEQMMDEEMVERTLRPQYLQEYIGQDKVKNQLKIFIEAAKLRDEALDHALLFGPPGLGKTTMAFVIANELGVNIKQTSGPVIEKAGDLVAILNDLEPGDVLFIDEIHRLPMAVEEVLYSAMEDFYIDIMIGSGDANRSVHLDLPPFTLIGATTRAGMLSNPLRARFGITGHMEYYEEADLTEIVERTAEIFEMDITHEAAKELALRSRGTPRIANRLLKRVRDYAQIMGNGLIDETITDQALSMLDVDHEGLDYVDQKILRTMIEMYGGGPVGLGTLSVNIAEERETVEDMYEPYLIQKGFIMRTRTGRVATRKAYEHLGYEYMEK.

A large ATPase domain (RuvB-L) region spans residues 1 to 181; it reads MSRILDNEQM…FGITGHMEYY (181 aa). Residues leucine 20, arginine 21, glycine 62, lysine 65, threonine 66, threonine 67, 128–130, arginine 171, tyrosine 181, and arginine 218 contribute to the ATP site; that span reads EDF. Position 66 (threonine 66) interacts with Mg(2+). Positions 182 to 252 are small ATPAse domain (RuvB-S); that stretch reads EEADLTEIVE…ITDQALSMLD (71 aa). The segment at 255–332 is head domain (RuvB-H); that stretch reads HEGLDYVDQK…EHLGYEYMEK (78 aa). Residues arginine 291, arginine 310, arginine 312, and arginine 315 each contribute to the DNA site.

It belongs to the RuvB family. Homohexamer. Forms an RuvA(8)-RuvB(12)-Holliday junction (HJ) complex. HJ DNA is sandwiched between 2 RuvA tetramers; dsDNA enters through RuvA and exits via RuvB. An RuvB hexamer assembles on each DNA strand where it exits the tetramer. Each RuvB hexamer is contacted by two RuvA subunits (via domain III) on 2 adjacent RuvB subunits; this complex drives branch migration. In the full resolvosome a probable DNA-RuvA(4)-RuvB(12)-RuvC(2) complex forms which resolves the HJ.

It is found in the cytoplasm. It carries out the reaction ATP + H2O = ADP + phosphate + H(+). In terms of biological role, the RuvA-RuvB-RuvC complex processes Holliday junction (HJ) DNA during genetic recombination and DNA repair, while the RuvA-RuvB complex plays an important role in the rescue of blocked DNA replication forks via replication fork reversal (RFR). RuvA specifically binds to HJ cruciform DNA, conferring on it an open structure. The RuvB hexamer acts as an ATP-dependent pump, pulling dsDNA into and through the RuvAB complex. RuvB forms 2 homohexamers on either side of HJ DNA bound by 1 or 2 RuvA tetramers; 4 subunits per hexamer contact DNA at a time. Coordinated motions by a converter formed by DNA-disengaged RuvB subunits stimulates ATP hydrolysis and nucleotide exchange. Immobilization of the converter enables RuvB to convert the ATP-contained energy into a lever motion, pulling 2 nucleotides of DNA out of the RuvA tetramer per ATP hydrolyzed, thus driving DNA branch migration. The RuvB motors rotate together with the DNA substrate, which together with the progressing nucleotide cycle form the mechanistic basis for DNA recombination by continuous HJ branch migration. Branch migration allows RuvC to scan DNA until it finds its consensus sequence, where it cleaves and resolves cruciform DNA. The sequence is that of Holliday junction branch migration complex subunit RuvB from Streptococcus gordonii (strain Challis / ATCC 35105 / BCRC 15272 / CH1 / DL1 / V288).